The following is a 158-amino-acid chain: Protein Smg homolog (158 aa).

This sequence belongs to the Smg family.

This is Protein Smg homolog from Alteromonas mediterranea (strain DSM 17117 / CIP 110805 / LMG 28347 / Deep ecotype).